A 521-amino-acid polypeptide reads, in one-letter code: 2-isopropylmalate synthase (521 aa).

Positions 12 to 274 (VIIFDTTLRD…WNKIDTTMLT (263 aa)) constitute a Pyruvate carboxyltransferase domain. Mn(2+)-binding residues include Asp21, His209, His211, and Asn245. Positions 398 to 521 (KLLSLTVIAG…DLPVPEAAAS (124 aa)) are regulatory domain.

The protein belongs to the alpha-IPM synthase/homocitrate synthase family. LeuA type 1 subfamily. As to quaternary structure, homodimer. Requires Mn(2+) as cofactor.

The protein localises to the cytoplasm. It carries out the reaction 3-methyl-2-oxobutanoate + acetyl-CoA + H2O = (2S)-2-isopropylmalate + CoA + H(+). Its pathway is amino-acid biosynthesis; L-leucine biosynthesis; L-leucine from 3-methyl-2-oxobutanoate: step 1/4. Catalyzes the condensation of the acetyl group of acetyl-CoA with 3-methyl-2-oxobutanoate (2-ketoisovalerate) to form 3-carboxy-3-hydroxy-4-methylpentanoate (2-isopropylmalate). This chain is 2-isopropylmalate synthase, found in Rhodopseudomonas palustris (strain BisB18).